The sequence spans 545 residues: Cleavage and polyadenylation specificity factor subunit 6 (545 aa).

A disordered region spans residues 37–69; the sequence is ISPSANNGDAPEDRDYLDSLPAPGGNEGSKGAP. The RRM domain occupies 81–161; the sequence is IALYIGNLTW…QNPIVTPCNK (81 aa). Residues 165-180 show a composition bias toward polar residues; sequence SQFEMQSRKSTQSGQM. Disordered stretches follow at residues 165-404 and 478-545; these read SQFE…PLSE and YGSV…YRHR. Residues 184–200 are compositionally biased toward gly residues; it reads GKAGPPGSGSRGGGFPP. Composition is skewed to pro residues over residues 220–230, 237–265, 287–363, and 372–383; these read PVGPGGPPPHF, PRLP…PLGG, PMGP…PPGN, and GPPPGDPYGRPP. Composition is skewed to basic and acidic residues over residues 384–397 and 483–497; these read PYDR…DMDA and GRRE…SRSR. Positions 498–508 are enriched in basic residues; it reads EKSRRHKSRSR. The segment covering 509–545 has biased composition (basic and acidic residues); sequence DRHEDYYRERSRERDRHRERDRDRERDREREREYRHR.

Belongs to the RRM CPSF6/7 family. As to quaternary structure, component of the cleavage factor Im (CFIm) complex.

The protein resides in the nucleus. Its subcellular location is the nucleoplasm. It is found in the nucleus speckle. It localises to the cytoplasm. In terms of biological role, component of the cleavage factor Im (CFIm) complex that functions as an activator of the pre-mRNA 3'-end cleavage and polyadenylation processing required for the maturation of pre-mRNA into functional mRNAs. CFIm contributes to the recruitment of multiprotein complexes on specific sequences on the pre-mRNA 3'-end, so called cleavage and polyadenylation signals (pA signals). Most pre-mRNAs contain multiple pA signals, resulting in alternative cleavage and polyadenylation (APA) producing mRNAs with variable 3'-end formation. The CFIm complex acts as a key regulator of cleavage and polyadenylation site choice during APA through its binding to 5'-UGUA-3' elements localized in the 3'-untranslated region (UTR) for a huge number of pre-mRNAs. Plays a role in mRNA export. This Danio rerio (Zebrafish) protein is Cleavage and polyadenylation specificity factor subunit 6.